The sequence spans 103 residues: Iron-sulfur cluster assembly protein CyaY (103 aa).

The protein belongs to the frataxin family.

Functionally, involved in iron-sulfur (Fe-S) cluster assembly. May act as a regulator of Fe-S biogenesis. This Rickettsia africae (strain ESF-5) protein is Iron-sulfur cluster assembly protein CyaY.